A 662-amino-acid chain; its full sequence is UvrABC system protein B (662 aa).

In terms of domain architecture, Helicase ATP-binding spans 31 to 188 (DNIEGGEKAQ…NDLVDIQFER (158 aa)). 44–51 (GATGTGKT) is a binding site for ATP. The short motif at 97–120 (YYDYYQPEAYVPSSDTYIEKDSSV) is the Beta-hairpin element. A Helicase C-terminal domain is found at 435–601 (QIDDLLGEIN…TIKKEIRDLI (167 aa)). The 36-residue stretch at 626 to 661 (KELVKKLEKQMQEAVEVLDFELAAQIRDMMLEVKAL) folds into the UVR domain.

Belongs to the UvrB family. In terms of assembly, forms a heterotetramer with UvrA during the search for lesions. Interacts with UvrC in an incision complex.

It is found in the cytoplasm. The UvrABC repair system catalyzes the recognition and processing of DNA lesions. A damage recognition complex composed of 2 UvrA and 2 UvrB subunits scans DNA for abnormalities. Upon binding of the UvrA(2)B(2) complex to a putative damaged site, the DNA wraps around one UvrB monomer. DNA wrap is dependent on ATP binding by UvrB and probably causes local melting of the DNA helix, facilitating insertion of UvrB beta-hairpin between the DNA strands. Then UvrB probes one DNA strand for the presence of a lesion. If a lesion is found the UvrA subunits dissociate and the UvrB-DNA preincision complex is formed. This complex is subsequently bound by UvrC and the second UvrB is released. If no lesion is found, the DNA wraps around the other UvrB subunit that will check the other stand for damage. The chain is UvrABC system protein B from Streptococcus pneumoniae (strain Hungary19A-6).